The sequence spans 409 residues: Threonine dehydratase-like protein AKTS1-1 (409 aa).

Residues 1–21 are disordered; the sequence is MADYLRQVMPENDSDSEALPR. Lys111 carries the post-translational modification N6-(pyridoxal phosphate)lysine. Pyridoxal 5'-phosphate-binding positions include Asn138, 239–243, and Ser368; that span reads GEGSL.

The protein belongs to the serine/threonine dehydratase family. Pyridoxal 5'-phosphate serves as cofactor.

It participates in mycotoxin biosynthesis. Its function is as follows. Threonine dehydratase-like protein; part of the gene clusters that mediate the biosynthesis of the host-selective toxins (HSTs) AK-toxins responsible for Japanese pear black spot disease by the Japanese pear pathotype. AK-toxins are esters of 9,10-epoxy 8-hydroxy 9-methyldecatrienoic acid (EDA). On cellular level, AK-toxins affect plasma membrane of susceptible cells and cause a sudden increase in loss of K(+) after a few minutes of toxin treatment. The acyl-CoA ligase AKT1, the hydrolase AKT2 and enoyl-CoA hydratase AKT3 are all involved in the biosynthesis of the AK-, AF- and ACT-toxin common 9,10-epoxy-8-hydroxy-9-methyl-decatrienoic acid (EDA) structural moiety. Part of the EDA biosynthesis occurs in the peroxisome since these 3 enzymes are localized in peroxisomes. The exact roles of the 3 enzymes, as well as of additional AK-toxin clusters enzymes, including AKT4, AKT6 and AKTS1, have still to be elucidated. The Cytochrome P450 monooxygenase AKT7 on the other side functions to limit production of EDA and AK-toxin, probably via the catalysis of a side reaction of EDA or its precursor. The sequence is that of Threonine dehydratase-like protein AKTS1-1 from Alternaria alternata (Alternaria rot fungus).